The following is a 20-amino-acid chain: Short cationic peptide-4c (20 aa).

Glu20 carries the post-translational modification Glutamic acid 1-amide.

As to expression, expressed by the venom gland.

The protein localises to the secreted. The protein is Short cationic peptide-4c of Cupiennius salei (American wandering spider).